The primary structure comprises 152 residues: Deoxyuridine 5'-triphosphate nucleotidohydrolase (152 aa).

Residues 65–67 (RSG), Asn78, and 82–84 (TID) each bind substrate.

Belongs to the dUTPase family. Mg(2+) serves as cofactor.

The enzyme catalyses dUTP + H2O = dUMP + diphosphate + H(+). The protein operates within pyrimidine metabolism; dUMP biosynthesis; dUMP from dCTP (dUTP route): step 2/2. Its function is as follows. This enzyme is involved in nucleotide metabolism: it produces dUMP, the immediate precursor of thymidine nucleotides and it decreases the intracellular concentration of dUTP so that uracil cannot be incorporated into DNA. This chain is Deoxyuridine 5'-triphosphate nucleotidohydrolase, found in Chlorobaculum tepidum (strain ATCC 49652 / DSM 12025 / NBRC 103806 / TLS) (Chlorobium tepidum).